The following is a 912-amino-acid chain: Probable dipeptidyl-aminopeptidase B (912 aa).

Residues 1 to 25 are compositionally biased toward basic and acidic residues; it reads MAAEKGESSDEERKPLTRDSMEYRD. Disordered regions lie at residues 1 to 31 and 49 to 70; these read MAAEKGESSDEERKPLTRDSMEYRDSSNSLH and GSTHDTGPNEIGRGDRDYSDDG. Residues 1–92 are Cytoplasmic-facing; the sequence is MAAEKGESSD…GGKPVQKKVK (92 aa). A helical; Signal-anchor for type II membrane protein membrane pass occupies residues 93 to 113; sequence IVLGFLLFLCLSGWSLSFVLF. Topologically, residues 114–912 are vacuolar; it reads LFGGHESSKT…RAAIWVGLSI (799 aa). N130, N210, N346, N569, and N656 each carry an N-linked (GlcNAc...) asparagine glycan. S751 (charge relay system) is an active-site residue. The N-linked (GlcNAc...) asparagine glycan is linked to N810. Residues D828 and H861 each act as charge relay system in the active site. N897 carries an N-linked (GlcNAc...) asparagine glycan.

It belongs to the peptidase S9B family.

Its subcellular location is the vacuole membrane. The enzyme catalyses Release of an N-terminal dipeptide, Xaa-Yaa-|-Zaa-, from a polypeptide, preferentially when Yaa is Pro, provided Zaa is neither Pro nor hydroxyproline.. In terms of biological role, type IV dipeptidyl-peptidase which removes N-terminal dipeptides sequentially from polypeptides having unsubstituted N-termini provided that the penultimate residue is proline. This Paracoccidioides lutzii (strain ATCC MYA-826 / Pb01) (Paracoccidioides brasiliensis) protein is Probable dipeptidyl-aminopeptidase B (DAPB).